Here is a 176-residue protein sequence, read N- to C-terminus: DELTA-stichotoxin-She4a (176 aa).

The tract at residues E2–A11 is plays an important role in the hemolytic activity. The interval G10 to S29 is N-terminal region. Residues S53, V86, S104, P106, Y132, Y136, and Y137 each coordinate phosphocholine. A trp-rich region, which is important for the binding to lipid membrane region spans residues S104–K119. The Cell attachment site motif lies at R142 to D144.

In terms of assembly, octamer or nonamer in membranes. Monomer in the soluble state.

The protein localises to the secreted. The protein resides in the nematocyst. Its subcellular location is the target cell membrane. Functionally, pore-forming protein that forms cations-selective hydrophilic pores of around 1 nm and causes cardiac stimulation and cytolysis. Pore formation is a multi-step process that involves specific recognition of membrane sphingomyelin (but neither cholesterol nor phosphatidylcholine) using aromatic rich region and adjacent phosphocholine (POC) binding site, firm binding to the membrane (mainly driven by hydrophobic interactions) accompanied by the transfer of the N-terminal region to the lipid-water interface and finally pore formation after oligomerization of monomers. Cytolytic effects include red blood cells hemolysis, platelet aggregation and lysis, cytotoxic and cytostatic effects on fibroblasts. Lethality in mammals has been ascribed to severe vasospasm of coronary vessels, cardiac arrhythmia, and inotropic effects. The polypeptide is DELTA-stichotoxin-She4a (Stichodactyla helianthus (Sun anemone)).